A 265-amino-acid polypeptide reads, in one-letter code: Speedy protein E12 (265 aa).

The interval Met-1–Pro-80 is disordered. The span at Gln-13 to Gln-23 shows a compositional bias: low complexity. Over residues Asp-66–Pro-80 the composition is skewed to acidic residues.

The protein belongs to the Speedy/Ringo family.

The sequence is that of Speedy protein E12 from Homo sapiens (Human).